The chain runs to 363 residues: Type-2 angiotensin II receptor (363 aa).

Residues 1–45 (MKDNFSFAATSRNITSSRPFDNLNATGTNESAFNCSHKPSDKHLE) are Extracellular-facing. Residues N4, N13, N24, N29, and N34 are each glycosylated (N-linked (GlcNAc...) asparagine). Disulfide bonds link C35-C290 and C117-C195. A helical transmembrane segment spans residues 46–70 (AIPVLYYMIFVIGFAVNIVVVSLFC). Topologically, residues 71–80 (CQKGPKKVSS) are cytoplasmic. The chain crosses the membrane as a helical span at residues 81-104 (IYIFNLALADLLLLATLPLWATYY). The angiotensin II site is built by Y103 and Y104. Residues 105–114 (SYRYDWLFGP) lie on the Extracellular side of the membrane. The chain crosses the membrane as a helical span at residues 115–140 (VMCKVFGSFLTLNMFASIFFITCMSV). Residues 141 to 159 (DRYQSVIYPFLSQRRNPWQ) lie on the Cytoplasmic side of the membrane. Residues 160–181 (ASYVVPLVWCMACLSSLPTFYF) traverse the membrane as a helical segment. The angiotensin II site is built by R182, Y204, and K215. Over 182 to 206 (RDVRTIEYLGVNACIMAFPPEKYAQ) the chain is Extracellular. The helical transmembrane segment at 207 to 232 (WSAGIALMKNILGFIIPLIFIATCYF) threads the bilayer. At 233–257 (GIRKHLLKTNSYGKNRITRDQVLKM) the chain is on the cytoplasmic side. A helical transmembrane segment spans residues 258 to 281 (AAAVVLAFIICWLPFHVLTFLDAL). D279 is a binding site for angiotensin II. The Extracellular segment spans residues 282 to 294 (TWMGIINSCEVIA). The helical transmembrane segment at 295–320 (VIDLALPFAILLGFTNSCVNPFLYCF) threads the bilayer. D297 lines the angiotensin II pocket. Topologically, residues 321–363 (VGNRFQQKLRSVFRVPITWLQGKRETMSCRKGSSLREMDTFVS) are cytoplasmic. The interval 324–333 (RFQQKLRSVF) is helix VIII. S354 bears the Phosphoserine; by PKC mark.

The protein belongs to the G-protein coupled receptor 1 family. As to quaternary structure, interacts with MTUS1. As to expression, expressed at highest levels in adrenal gland and uterus.

Its subcellular location is the cell membrane. Its function is as follows. Receptor for angiotensin II, a vasoconstricting peptide. Signals primarily via a non-canonical G-protein- and beta-arrestin independent pathways. Cooperates with MTUS1 to inhibit ERK2 activation and cell proliferation. The protein is Type-2 angiotensin II receptor of Mus musculus (Mouse).